We begin with the raw amino-acid sequence, 234 residues long: Carboxy-S-adenosyl-L-methionine synthase (234 aa).

Residues tyrosine 35, 60–62, 83–84, 109–110, asparagine 124, and arginine 191 contribute to the S-adenosyl-L-methionine site; these read GCS, DN, and DI.

The protein belongs to the class I-like SAM-binding methyltransferase superfamily. Cx-SAM synthase family. In terms of assembly, homodimer.

The catalysed reaction is prephenate + S-adenosyl-L-methionine = carboxy-S-adenosyl-L-methionine + 3-phenylpyruvate + H2O. Catalyzes the conversion of S-adenosyl-L-methionine (SAM) to carboxy-S-adenosyl-L-methionine (Cx-SAM). The chain is Carboxy-S-adenosyl-L-methionine synthase from Campylobacter hominis (strain ATCC BAA-381 / DSM 21671 / CCUG 45161 / LMG 19568 / NCTC 13146 / CH001A).